Reading from the N-terminus, the 59-residue chain is Chromatin protein Cren7 (59 aa).

The protein belongs to the Cren7 family. In terms of assembly, monomer. In terms of processing, methylated at multiple sites, to varying extents.

The protein localises to the chromosome. It is found in the cytoplasm. In terms of biological role, a chromatin protein, binds double-stranded DNA without sequence specificity. Constrains negative DNA supercoils. The protein is Chromatin protein Cren7 of Pyrobaculum neutrophilum (strain DSM 2338 / JCM 9278 / NBRC 100436 / V24Sta) (Thermoproteus neutrophilus).